We begin with the raw amino-acid sequence, 275 residues long: Lectin (275 aa).

The N-terminal stretch at 1-30 is a signal peptide; that stretch reads MASLQTQMISFYLIFLSILLTTIFFFKVNS. D-glucose contacts are provided by aspartate 111 and glycine 129. Mn(2+) contacts are provided by glutamate 149 and aspartate 151. 4 residues coordinate Ca(2+): aspartate 151, phenylalanine 153, asparagine 155, and aspartate 159. Mn(2+) contacts are provided by aspartate 159 and histidine 166. The propeptide occupies 211–217; the sequence is NSLEEEN. Residues glycine 246 and alanine 247 each coordinate D-glucose. Residues 270–275 constitute a propeptide that is removed on maturation; that stretch reads KQAADA.

This sequence belongs to the leguminous lectin family. As to quaternary structure, heterotetramer of two alpha and two beta chains. The mature form consists of two chains, alpha and beta, produced by cleavage of the immature protein. These remain cleaved, yet fold together to form one subunit.

D-mannose specific lectin. The chain is Lectin from Lens culinaris subsp. tomentosus (Lentil).